The sequence spans 288 residues: UPF0761 membrane protein HS_0693 (288 aa).

6 helical membrane-spanning segments follow: residues 36–56 (TLAL…FPVF), 92–112 (QMSA…IHSI), 127–147 (PAIF…IVIA), 176–196 (LLSL…YMVV), 200–220 (KVSI…FTLG), and 240–260 (AMAT…AVLL).

This sequence belongs to the UPF0761 family.

The protein resides in the cell inner membrane. This chain is UPF0761 membrane protein HS_0693, found in Histophilus somni (strain 129Pt) (Haemophilus somnus).